The chain runs to 141 residues: Large ribosomal subunit protein uL11 (141 aa).

It belongs to the universal ribosomal protein uL11 family. As to quaternary structure, part of the ribosomal stalk of the 50S ribosomal subunit. Interacts with L10 and the large rRNA to form the base of the stalk. L10 forms an elongated spine to which L12 dimers bind in a sequential fashion forming a multimeric L10(L12)X complex. Post-translationally, one or more lysine residues are methylated.

Its function is as follows. Forms part of the ribosomal stalk which helps the ribosome interact with GTP-bound translation factors. The protein is Large ribosomal subunit protein uL11 of Bacillus cereus (strain ATCC 10987 / NRS 248).